The sequence spans 338 residues: NADPH dehydrogenase (338 aa).

Residue tyrosine 28 participates in substrate binding. 2 residues coordinate FMN: alanine 60 and glutamine 102. A substrate-binding site is contributed by 164-167 (HAAH). FMN contacts are provided by residues arginine 215 and 307 to 308 (AR).

This sequence belongs to the NADH:flavin oxidoreductase/NADH oxidase family. NamA subfamily. As to quaternary structure, homotetramer. It depends on FMN as a cofactor.

It catalyses the reaction A + NADPH + H(+) = AH2 + NADP(+). In terms of biological role, catalyzes the reduction of the double bond of an array of alpha,beta-unsaturated aldehydes and ketones. It also reduces the nitro group of nitroester and nitroaromatic compounds. It could have a role in detoxification processes. This chain is NADPH dehydrogenase, found in Bacillus velezensis (strain DSM 23117 / BGSC 10A6 / LMG 26770 / FZB42) (Bacillus amyloliquefaciens subsp. plantarum).